A 151-amino-acid chain; its full sequence is DNA-directed RNA polymerase RPB6 homolog (151 aa).

The span at 20 to 44 shows a compositional bias: acidic residues; it reads ETEEENFVDSEEESEDKSEDKDEIV. The tract at residues 20–46 is disordered; sequence ETEEENFVDSEEESEDKSEDKDEIVES.

It belongs to the archaeal RpoK/eukaryotic RPB6 RNA polymerase subunit family. As to quaternary structure, part of the viral DNA-directed RNA polymerase that consists of 8 polII-like subunits (RPB1, RPB2, RPB3, RPB5, RPB6, RPB7, RPB9, RPB10), a capping enzyme and a termination factor.

It is found in the host cytoplasm. The protein localises to the virion. Functionally, component of the DNA-directed RNA polymerase (RNAP) that catalyzes the transcription in the cytoplasm of viral DNA into RNA using the four ribonucleoside triphosphates as substrates. The polypeptide is DNA-directed RNA polymerase RPB6 homolog (African swine fever virus (isolate Tick/Malawi/Lil 20-1/1983) (ASFV)).